A 199-amino-acid chain; its full sequence is Probable thymidylate kinase (199 aa).

13-20 is an ATP binding site; sequence GIDGAGKT.

It belongs to the thymidylate kinase family.

It carries out the reaction dTMP + ATP = dTDP + ADP. The protein is Probable thymidylate kinase of Staphylothermus marinus (strain ATCC 43588 / DSM 3639 / JCM 9404 / F1).